The following is a 776-amino-acid chain: Transcriptional regulator QRICH1 (776 aa).

Met1 bears the N-acetylmethionine mark. In terms of domain architecture, CARD spans 6 to 48; that stretch reads ENTISFEEYIRVKARSVPQHRMKEFLDSLASKGPEALQEFQQT. 2 disordered regions span residues 139–164 and 218–240; these read IQGQ…PSQL and ALSP…GTAS. At Ser345 the chain carries Phosphoserine. Residues Lys353 and Lys358 each participate in a glycyl lysine isopeptide (Lys-Gly) (interchain with G-Cter in SUMO2) cross-link. Residues 419 to 429 are compositionally biased toward low complexity; the sequence is QQQPQQQTPQE. The disordered stretch occupies residues 419-441; sequence QQQPQQQTPQEQTPPPQQQQQQL. At Ser464 the chain carries Phosphoserine.

The protein resides in the nucleus. It localises to the cytoplasm. It is found in the cell membrane. In terms of biological role, transcriptional regulator that acts as a mediator of the integrated stress response (ISR) through transcriptional control of protein homeostasis under conditions of ER stress. Controls the outcome of the unfolded protein response (UPR) which is an ER-stress response pathway. ER stress induces QRICH1 translation by a ribosome translation re-initiation mechanism in response to EIF2S1/eIF-2-alpha phosphorylation, and stress-induced QRICH1 regulates a transcriptional program associated with protein translation, protein secretion-mediated proteotoxicity and cell death during the terminal UPR. May cooperate with ATF4 transcription factor signaling to regulate ER homeostasis which is critical for cell viability. Up-regulates CASP3/caspase-3 activity in epithelial cells under ER stress. Central regulator of proteotoxicity associated with ER stress-mediated inflammatory diseases in the intestines and liver. Involved in chondrocyte hypertrophy, a process required for normal longitudinal bone growth. The polypeptide is Transcriptional regulator QRICH1 (Homo sapiens (Human)).